A 626-amino-acid polypeptide reads, in one-letter code: Glycosyltransferase 25 family member (626 aa).

A signal peptide spans 1 to 21 (MLKKQVFYGILLICAFVCIYG). Asparagine 113, asparagine 234, asparagine 272, and asparagine 533 each carry an N-linked (GlcNAc...) asparagine glycan. The Prevents secretion from ER motif lies at 623-626 (HQEL).

This sequence belongs to the glycosyltransferase 25 family.

Its subcellular location is the endoplasmic reticulum lumen. The polypeptide is Glycosyltransferase 25 family member (Drosophila pseudoobscura pseudoobscura (Fruit fly)).